Here is a 309-residue protein sequence, read N- to C-terminus: MSQPPLLDHATQTMANGSKSFATAAKLFDPATRRSVLMLYTWCRHCDDVIDDQTHGFASEAAAEEEATQRLARLRTLTLAAFEGAEMQDPAFAAFQEVALTHGITPRMALDHLDGFAMDVAQTRYVTFEDTLRYCYHVAGVVGLMMARVMGVRDERVLDRACDLGLAFQLTNIARDIIDDAAIDRCYLPAEWLQDAGLTPENYAARENRAALARVAERLIDAAEPYYISSQAGLHDLPPRCAWAIATARSVYREIGIKVKAAGGSAWDRRQHTSKGEKIAMLMAAPGQVIRAKTTRVTPRPAGLWQRPV.

The protein belongs to the phytoene/squalene synthase family. It depends on ATP as a cofactor. Requires Mn(2+) as cofactor. Mg(2+) serves as cofactor.

It functions in the pathway carotenoid biosynthesis; phytoene biosynthesis. In terms of biological role, involved in the biosynthesis of carotenoids. Catalyzes the condensation of two molecules of geranylgeranyl diphosphate (GGPP) to give prephytoene diphosphate (PPPP) and the subsequent rearrangement of the cyclopropylcarbinyl intermediate to yield phytoene. In Pseudescherichia vulneris (Escherichia vulneris), this protein is Phytoene synthase (crtB).